The primary structure comprises 197 residues: MEHYLSLFIKSVFIENMALSFFLGMCTFLAVSKKVSTAFGLGVAVIFVLGLSVPANQLVYSLLKDGAIVEGVDLTFLKFITFIGVIAALVQILEMFLDKFVPALYNALGIYLPLITVNCAIFGAVSFMAQREYDFGESVVYGFGAGLGWMLAIVALAGITEKMKYSDAPKGLKGLGITFIAAGLMAMAFMSFSGIQL.

6 consecutive transmembrane segments (helical) span residues Ser-11 to Val-31, Val-35 to Ala-55, Phe-76 to Phe-96, Leu-108 to Met-128, Val-139 to Ile-159, and Leu-175 to Ile-195.

Belongs to the NqrDE/RnfAE family. Composed of six subunits; NqrA, NqrB, NqrC, NqrD, NqrE and NqrF.

Its subcellular location is the cell inner membrane. The catalysed reaction is a ubiquinone + n Na(+)(in) + NADH + H(+) = a ubiquinol + n Na(+)(out) + NAD(+). Functionally, NQR complex catalyzes the reduction of ubiquinone-1 to ubiquinol by two successive reactions, coupled with the transport of Na(+) ions from the cytoplasm to the periplasm. NqrA to NqrE are probably involved in the second step, the conversion of ubisemiquinone to ubiquinol. The protein is Na(+)-translocating NADH-quinone reductase subunit E of Neisseria gonorrhoeae (strain ATCC 700825 / FA 1090).